The primary structure comprises 626 residues: Ankyrin repeat domain-containing protein 55 (626 aa).

ANK repeat units lie at residues 25–54 (VDLA…SILE), 59–88 (EGCT…NINT), 92–124 (YGRT…IPDK), 125–156 (NGRL…EINH), 160–189 (EGMT…DPTL), 193–222 (DFKT…GPSI), 229–259 (SGKT…NLQA), 263–292 (DDRT…DSNL), and 296–325 (NEST…AEPA). Basic and acidic residues predominate over residues 354–372 (KEEQKAHQKDQSRARPKEE). Disordered stretches follow at residues 354-377 (KEEQ…TSEV), 455-491 (HAGL…SLEN), and 522-626 (QPGH…HDEN). Phosphoserine is present on Ser474. Basic and acidic residues predominate over residues 604–614 (QRGHDPPRAEE). Residues 616–626 (GGSSSPTHDEN) are compositionally biased toward polar residues.

The sequence is that of Ankyrin repeat domain-containing protein 55 (Ankrd55) from Mus musculus (Mouse).